The sequence spans 248 residues: UPF0328 protein ECU06_0030/ECU06_1690/ECU11_0020 (248 aa).

Disordered regions lie at residues 1–34 and 51–81; these read MVRHSKNILPKTTNPNPESNRYPPHPADPSHPSR and ASAENRRRDPQNLSTTKATSPSTHQSPILPD. Polar residues-rich tracts occupy residues 10-19 and 61-76; these read PKTTNPNPES and QNLSTTKATSPSTHQS.

This sequence belongs to the UPF0328 family.

The chain is UPF0328 protein ECU06_0030/ECU06_1690/ECU11_0020 from Encephalitozoon cuniculi (strain GB-M1) (Microsporidian parasite).